Here is a 398-residue protein sequence, read N- to C-terminus: MAAGGGGGGVSRAALARPPIHRGTSAPGGAIAAAGGDGDGDEASRLLGRAQPREAPYLIPRPDGDLAVPDDLQYATLDLTGDPVAVGAGSYGSVLVYGSVAVKTLRAGFGHEAVMTLLAAEEARSAGVRGVVRLMGLSAPLRQLMFPAYEMDMDAYRRSLTARPGHVVHALGRVFTELGRALVFLNGRGLSHLDVKGGNIFVRTCGNMVVTAVIGDFSLMALNSRSALADPRFRLARRKALKITSLARSPPTGVLLGHARDRPTRVLMDFINGRPPPPGPLPYEVGLAIDLCALGHVLLDVALGLRPQRGQALTREYAVEVLARRCVLFAALLPPGSGPSAEALAGDILEEELAAGFREGVASSRPGNQPPRTVAPLLELVARFCGEDGGARFAELAA.

Positions 1–10 (MAAGGGGGGV) are enriched in gly residues. A disordered region spans residues 1–44 (MAAGGGGGGVSRAALARPPIHRGTSAPGGAIAAAGGDGDGDEAS). In terms of domain architecture, Protein kinase spans 80 to 398 (TGDPVAVGAG…GGARFAELAA (319 aa)). ATP is bound by residues 86 to 94 (VGAGSYGSV) and Lys103. Residue Asp194 is the Proton acceptor of the active site.

This sequence belongs to the protein kinase superfamily. Ser/Thr protein kinase family. Autophosphorylated.

The protein resides in the virion tegument. It localises to the host nucleus. The protein localises to the host cytoplasm. It is found in the host endoplasmic reticulum. It carries out the reaction L-seryl-[protein] + ATP = O-phospho-L-seryl-[protein] + ADP + H(+). It catalyses the reaction L-threonyl-[protein] + ATP = O-phospho-L-threonyl-[protein] + ADP + H(+). Multifunctional serine/threonine kinase that plays a role in several processes including egress of virus particles from the nucleus, modulation of the actin cytoskeleton and regulation of viral and cellular gene expression. Regulates the nuclear localization of viral envelopment factors UL34 and UL31, by phosphorylating the US3 kinase, indicating a role in nuclear egress. Disrupts host nuclear lamins, including LMNA and LMNB1. Phosphorylates the viral Fc receptor composed of glycoproteins E (gE) and I (gI). Phosphorylation of glycoprotein E (gE) by UL13 alters its subcellular localization, from the host early endosome to the plasma membrane. Participates in the transcriptional regulation of cellular and viral mRNAs mainly by phosphorylating the viral transcriptional regulator ICP22. Functions as an antagonist of the host RLR-mediated antiviral responses via suppression of the transcription of cytosolic receptors RIGI and IFIH1. Facilitates immune evasion also by recruiting host RNF5 to initiate the 'Lys-27'-/'Lys-29'-linked polyubiquitination of STING1; leading to its degradation. Blocks host IFN-beta transactivation mediated by the cGAS-STING pathway by phosphorylating host IRF3. In turn, IRF3 binding to the IRF3-responsive promoters and downstream interferon stimulated genes/ISG expression are greatly impaired. Induces the activation of the host DNA damage response via H2AX phosphorylation to improve efficient viral replication and progeny production. The protein is Serine/threonine-protein kinase UL13 (UL13) of Suid herpesvirus 1 (strain NIA-3) (SuHV-1).